Consider the following 330-residue polypeptide: Phosphate acyltransferase (330 aa).

This sequence belongs to the PlsX family. As to quaternary structure, homodimer. Probably interacts with PlsY.

Its subcellular location is the cytoplasm. The catalysed reaction is a fatty acyl-[ACP] + phosphate = an acyl phosphate + holo-[ACP]. It functions in the pathway lipid metabolism; phospholipid metabolism. Functionally, catalyzes the reversible formation of acyl-phosphate (acyl-PO(4)) from acyl-[acyl-carrier-protein] (acyl-ACP). This enzyme utilizes acyl-ACP as fatty acyl donor, but not acyl-CoA. This is Phosphate acyltransferase from Carboxydothermus hydrogenoformans (strain ATCC BAA-161 / DSM 6008 / Z-2901).